A 361-amino-acid chain; its full sequence is MLYWLTSISDGGDAFNLFRYITFRAGGAFFTALIFGFIFGRPLINLLRKRQRFGQPIREDGPESHLETKQGTPTMGGLLILSALTLATLLWARWDNGYVWLVLFVTVSFGLIGFMDDFQKVTKNSHAGVSGRVRLAMGFGIAGIAGAGALLLHPEPLAGQLALPVFKDTLINLSILFIPFCMIVIAGSANAVNLTDGLDGLAIMPVMIAAGTLGVIAYAVGRVDFTSYLDVHYVPGTGEIFVFTSALIGGGLGFLWYNAPPAAVFMGDTGSLALGGALGAIAVATKHEIVLVVVGGIFVVEALSVIIQVAYFKKTGKRVFLMAPIHHHFEKKGWQESQIVIRFWIISLILALIGLATLKVR.

A run of 10 helical transmembrane segments spans residues 27–47 (GAFF…INLL), 72–92 (TPTM…LLWA), 98–118 (YVWL…MDDF), 135–155 (LAMG…LHPE), 169–189 (TLIN…AGSA), 200–220 (GLAI…AYAV), 240–260 (IFVF…YNAP), 263–283 (AVFM…AIAV), 289–309 (IVLV…IIQV), and 338–358 (QIVI…LATL).

This sequence belongs to the glycosyltransferase 4 family. MraY subfamily. Mg(2+) serves as cofactor.

The protein resides in the cell inner membrane. It carries out the reaction UDP-N-acetyl-alpha-D-muramoyl-L-alanyl-gamma-D-glutamyl-meso-2,6-diaminopimeloyl-D-alanyl-D-alanine + di-trans,octa-cis-undecaprenyl phosphate = di-trans,octa-cis-undecaprenyl diphospho-N-acetyl-alpha-D-muramoyl-L-alanyl-D-glutamyl-meso-2,6-diaminopimeloyl-D-alanyl-D-alanine + UMP. It participates in cell wall biogenesis; peptidoglycan biosynthesis. Functionally, catalyzes the initial step of the lipid cycle reactions in the biosynthesis of the cell wall peptidoglycan: transfers peptidoglycan precursor phospho-MurNAc-pentapeptide from UDP-MurNAc-pentapeptide onto the lipid carrier undecaprenyl phosphate, yielding undecaprenyl-pyrophosphoryl-MurNAc-pentapeptide, known as lipid I. This Dinoroseobacter shibae (strain DSM 16493 / NCIMB 14021 / DFL 12) protein is Phospho-N-acetylmuramoyl-pentapeptide-transferase.